A 600-amino-acid polypeptide reads, in one-letter code: MGGGYVLFGSARSGQMIMVALVLMVGSFYAGSIFGNNSPIYISQPSSSNSSSSSPSQSGPSNFANKIELTYRRTSVSIPESGVNVCPLKFNEYIPCHNVTYVQQLLPSLNLSRREELERHCPPLEQRLFCLVPPPKDYKIPIRWPTSRDYVWRSNVNHTHLAEVKGGQNWVHEQGQLWWFPGGGTHFKHGAPEYIQRLGNMTTNETGDLLSAGVEQVLDVGCGVASFAAYLLPLGIKTMSFAPKDGHENQIQFALERGIRAMISAIATKQMPYPAASFDMVHCSRCRVDWHENDGVLMKEVNRLLRPNGYFVYSAPPAYRKDKDFPVIWDKLVNLTSAMCWKLISRKVQTAIWVKEDDEACLRKNAELELITICGVEDVSKASWKVPLRDCVDISENRQQKPSSLTDRLSSYPTSLREKGISEDEFTLDTNFWREQVNQYWELMNVNKTEVRNVMDTNAFIGGFAAAMNSYPLWVMNVVPATMNDTLSGIYQRGLTGAYHDWCEPFSTYPRTYDLLHADHLFTHYKIYGEGCLLEDIMLEMDRIIRPQGFIIIRDEESIVSRVRDLAPKFLWEVEAHELQDKYKKTETVLFCRKKFWAIL.

At 1-15 (MGGGYVLFGSARSGQ) the chain is on the cytoplasmic side. Residues 16–36 (MIMVALVLMVGSFYAGSIFGN) traverse the membrane as a helical; Signal-anchor for type II membrane protein segment. At 37–600 (NSPIYISQPS…FCRKKFWAIL (564 aa)) the chain is on the lumenal side. 9 N-linked (GlcNAc...) asparagine glycosylation sites follow: Asn49, Asn98, Asn110, Asn157, Asn200, Asn204, Asn334, Asn447, and Asn484.

The protein belongs to the methyltransferase superfamily.

Its subcellular location is the golgi apparatus membrane. This Arabidopsis thaliana (Mouse-ear cress) protein is Probable methyltransferase PMT7.